Reading from the N-terminus, the 860-residue chain is Leucine--tRNA ligase (860 aa).

A 'HIGH' region motif is present at residues 42–52; the sequence is PYPSGRLHMGH. A 'KMSKS' region motif is present at residues 619–623; sequence KMSKS. K622 provides a ligand contact to ATP.

It belongs to the class-I aminoacyl-tRNA synthetase family.

It localises to the cytoplasm. The enzyme catalyses tRNA(Leu) + L-leucine + ATP = L-leucyl-tRNA(Leu) + AMP + diphosphate. The protein is Leucine--tRNA ligase of Salmonella agona (strain SL483).